Reading from the N-terminus, the 308-residue chain is Carbonic anhydrase 4 (308 aa).

The first 18 residues, 1–18, serve as a signal peptide directing secretion; that stretch reads MQLLFALLALGALRPLAG. The 261-residue stretch at 21–281 folds into the Alpha-carbonic anhydrase domain; that stretch reads LHWCYEIQAS…LGDRSVFKSQ (261 aa). Cystine bridges form between Cys24-Cys34 and Cys44-Cys225. Asn31 is a glycosylation site (N-linked (GlcNAc...) asparagine). The Proton donor/acceptor role is filled by His86. Zn(2+) contacts are provided by His113, His115, and His138. Asn192 carries N-linked (GlcNAc...) asparagine glycosylation. 221-222 contributes to the substrate binding site; the sequence is TT. A lipid anchor (GPI-anchor amidated serine) is attached at Ser280. Positions 281-308 are cleaved as a propeptide — removed in mature form; it reads QAAGQLLPLPLPTLLVPTLACVMAGLLR.

Belongs to the alpha-carbonic anhydrase family. As to quaternary structure, interacts with SLC4A4. Zn(2+) is required as a cofactor.

The protein resides in the cell membrane. It carries out the reaction hydrogencarbonate + H(+) = CO2 + H2O. With respect to regulation, inhibited by acetazolamide. Its function is as follows. Catalyzes the reversible hydration of carbon dioxide into bicarbonate and protons and thus is essential to maintaining intracellular and extracellular pH. May stimulate the sodium/bicarbonate transporter activity of SLC4A4 that acts in pH homeostasis. It is essential for acid overload removal from the retina and retina epithelium, and acid release in the choriocapillaris in the choroid. This chain is Carbonic anhydrase 4 (CA4), found in Oryctolagus cuniculus (Rabbit).